Consider the following 305-residue polypeptide: Probable aspartoacylase (305 aa).

Histidine 13 and glutamate 16 together coordinate Zn(2+). Residues arginine 55 and 62–63 (NR) each bind substrate. A Zn(2+)-binding site is contributed by histidine 105. Positions 163 and 273 each coordinate substrate.

It belongs to the AspA/AstE family. Aspartoacylase subfamily. Zn(2+) is required as a cofactor.

It carries out the reaction an N-acyl-L-aspartate + H2O = a carboxylate + L-aspartate. In Prochlorococcus marinus (strain NATL2A), this protein is Probable aspartoacylase.